The sequence spans 421 residues: ATP-dependent RNA helicase RhlB (421 aa).

The short motif at 9–37 (QKFSDFALHPKVVEALEKKGFHNCTPIQA) is the Q motif element. The Helicase ATP-binding domain occupies 40–219 (LPLTLAGRDV…FEQMNNAEYI (180 aa)). Residue 53-60 (AQTGTGKT) coordinates ATP. A DEAD box motif is present at residues 165 to 168 (DEAD). Positions 245–390 (RLLQTLIEEE…VSKYNPDALM (146 aa)) constitute a Helicase C-terminal domain. The segment at 395–421 (KPLRLTRARTGNGPRRTGAPRNRRRSG) is disordered. A compositionally biased stretch (low complexity) spans 402-414 (ARTGNGPRRTGAP).

This sequence belongs to the DEAD box helicase family. RhlB subfamily. As to quaternary structure, component of the RNA degradosome, which is a multiprotein complex involved in RNA processing and mRNA degradation.

Its subcellular location is the cytoplasm. The catalysed reaction is ATP + H2O = ADP + phosphate + H(+). DEAD-box RNA helicase involved in RNA degradation. Has RNA-dependent ATPase activity and unwinds double-stranded RNA. In Shigella flexneri serotype 5b (strain 8401), this protein is ATP-dependent RNA helicase RhlB.